Consider the following 227-residue polypeptide: MNTAIVLAGGSGKRMHSEIPKQYMQLNGKPVIYYSLKAFEESEHVDEIILVTAKEYIEYVRNEIAGSQFAKLTKIIEGGKERFDSVWAGLQQISEKGYVYIHDGARPCINQNIINACWETVVQTDACVAAAPVKDTIKVADADEYAINTPDRKTLWQIQTPQVFSADVIKEAYSRLYEQNCFDGVTDDAMVVERYGNSKIKLVNCGYCNIKITTPEDMEIAGIFLKG.

The protein belongs to the IspD/TarI cytidylyltransferase family. IspD subfamily.

It carries out the reaction 2-C-methyl-D-erythritol 4-phosphate + CTP + H(+) = 4-CDP-2-C-methyl-D-erythritol + diphosphate. It functions in the pathway isoprenoid biosynthesis; isopentenyl diphosphate biosynthesis via DXP pathway; isopentenyl diphosphate from 1-deoxy-D-xylulose 5-phosphate: step 2/6. Functionally, catalyzes the formation of 4-diphosphocytidyl-2-C-methyl-D-erythritol from CTP and 2-C-methyl-D-erythritol 4-phosphate (MEP). The protein is 2-C-methyl-D-erythritol 4-phosphate cytidylyltransferase of Lachnospira eligens (strain ATCC 27750 / DSM 3376 / VPI C15-48 / C15-B4) (Eubacterium eligens).